The primary structure comprises 167 residues: Ribosome maturation factor RimP (167 aa).

It belongs to the RimP family.

The protein localises to the cytoplasm. Required for maturation of 30S ribosomal subunits. In Streptomyces griseus subsp. griseus (strain JCM 4626 / CBS 651.72 / NBRC 13350 / KCC S-0626 / ISP 5235), this protein is Ribosome maturation factor RimP.